The primary structure comprises 739 residues: NAD(P)H-quinone oxidoreductase subunit 5, chloroplastic (739 aa).

The next 16 helical transmembrane spans lie at Leu-9–Phe-29, Trp-40–Ile-60, Ile-89–Ile-109, Phe-125–Ile-145, Ile-147–Thr-167, Gly-185–Phe-205, Leu-224–Phe-244, Thr-258–Ala-278, Leu-283–Leu-303, Leu-327–Ile-347, Ala-354–Ser-374, Thr-396–Ser-416, Trp-425–Tyr-445, Leu-546–Phe-566, Ile-605–Ile-625, and Ile-718–Val-738.

This sequence belongs to the complex I subunit 5 family. In terms of assembly, NDH is composed of at least 16 different subunits, 5 of which are encoded in the nucleus.

It localises to the plastid. The protein localises to the chloroplast thylakoid membrane. The enzyme catalyses a plastoquinone + NADH + (n+1) H(+)(in) = a plastoquinol + NAD(+) + n H(+)(out). It catalyses the reaction a plastoquinone + NADPH + (n+1) H(+)(in) = a plastoquinol + NADP(+) + n H(+)(out). Functionally, NDH shuttles electrons from NAD(P)H:plastoquinone, via FMN and iron-sulfur (Fe-S) centers, to quinones in the photosynthetic chain and possibly in a chloroplast respiratory chain. The immediate electron acceptor for the enzyme in this species is believed to be plastoquinone. Couples the redox reaction to proton translocation, and thus conserves the redox energy in a proton gradient. The sequence is that of NAD(P)H-quinone oxidoreductase subunit 5, chloroplastic (ndhF) from Buxus microphylla (Littleleaf boxwood).